Here is a 468-residue protein sequence, read N- to C-terminus: Putative ankyrin repeat protein R873 (468 aa).

14 ANK repeats span residues 38–68 (IKTDIIEYIVDNNLLDVLKYFVVLKNLKHNL), 78–107 (SLNENLVKNCEKGNIEIIKYLLDIGADIEG), 109–137 (DNCAVLTASHHGHIEVVKYLVCKGANFRA), 138–167 (NNDKAVRWASDKGHLDVVKYLVSQGSDIRS), 169–197 (NDCSICWASGNGHLEMVKYLVSQGVNIRT), 198–227 (NDDWAIRLASENGHLEVVKYLVSQGADIRS), 229–257 (DDHAIKWASGNGHLEMVKYLVSQSSNIIA), 258–287 (EDNYAVRWASENGHLEVIKYLVSQGSNITS), 289–316 (YYTIIAASKNGHIDIVKYLVSQGVNIRD), 317–346 (CDSSAVQIASENGHLEVVKYLVSQGIDFRE), 348–376 (DDLTFDMALRKGHVEIVKYLVGQGVDFRV), 378–406 (DDYPVRMASHCGRLGVVKYFVSQGADVRA), 407–436 (EDDYAVRMSAEKGHIEVVKFLVDNGANIRA), and 438–466 (NDYAVRLASENGHIKIVEYLVSMGAVLNK).

In Acanthamoeba polyphaga mimivirus (APMV), this protein is Putative ankyrin repeat protein R873.